We begin with the raw amino-acid sequence, 343 residues long: Small ribosomal subunit biogenesis GTPase RsgA (343 aa).

A CP-type G domain is found at 116 to 275 (RGQLKPVAAN…LIDSPGIREF (160 aa)). GTP is bound by residues 163-166 (NKFD) and 217-225 (GQSGVGKSS). Zn(2+) is bound by residues Cys-299, Cys-304, His-306, and Cys-312.

This sequence belongs to the TRAFAC class YlqF/YawG GTPase family. RsgA subfamily. As to quaternary structure, monomer. Associates with 30S ribosomal subunit, binds 16S rRNA. Requires Zn(2+) as cofactor.

Its subcellular location is the cytoplasm. Its function is as follows. One of several proteins that assist in the late maturation steps of the functional core of the 30S ribosomal subunit. Helps release RbfA from mature subunits. May play a role in the assembly of ribosomal proteins into the subunit. Circularly permuted GTPase that catalyzes slow GTP hydrolysis, GTPase activity is stimulated by the 30S ribosomal subunit. This chain is Small ribosomal subunit biogenesis GTPase RsgA, found in Pseudomonas fluorescens (strain SBW25).